A 254-amino-acid polypeptide reads, in one-letter code: Thiazole synthase (254 aa).

The active-site Schiff-base intermediate with DXP is the Lys-96. 1-deoxy-D-xylulose 5-phosphate-binding positions include Gly-157, 183–184 (AG), and 205–206 (NT).

The protein belongs to the ThiG family. As to quaternary structure, homotetramer. Forms heterodimers with either ThiH or ThiS.

The protein resides in the cytoplasm. The enzyme catalyses [ThiS sulfur-carrier protein]-C-terminal-Gly-aminoethanethioate + 2-iminoacetate + 1-deoxy-D-xylulose 5-phosphate = [ThiS sulfur-carrier protein]-C-terminal Gly-Gly + 2-[(2R,5Z)-2-carboxy-4-methylthiazol-5(2H)-ylidene]ethyl phosphate + 2 H2O + H(+). The protein operates within cofactor biosynthesis; thiamine diphosphate biosynthesis. In terms of biological role, catalyzes the rearrangement of 1-deoxy-D-xylulose 5-phosphate (DXP) to produce the thiazole phosphate moiety of thiamine. Sulfur is provided by the thiocarboxylate moiety of the carrier protein ThiS. In vitro, sulfur can be provided by H(2)S. This chain is Thiazole synthase, found in Clostridium perfringens (strain 13 / Type A).